Consider the following 408-residue polypeptide: LL-diaminopimelate aminotransferase (408 aa).

Substrate is bound by residues Y15 and G42. Pyridoxal 5'-phosphate is bound by residues Y72, 108–109 (SK), Y132, N187, Y218, and 246–248 (SFS). Residues K109, Y132, and N187 each coordinate substrate. K249 is subject to N6-(pyridoxal phosphate)lysine. 2 residues coordinate pyridoxal 5'-phosphate: R257 and N292. The substrate site is built by N292 and R388.

The protein belongs to the class-I pyridoxal-phosphate-dependent aminotransferase family. LL-diaminopimelate aminotransferase subfamily. In terms of assembly, homodimer. Requires pyridoxal 5'-phosphate as cofactor.

The catalysed reaction is (2S,6S)-2,6-diaminopimelate + 2-oxoglutarate = (S)-2,3,4,5-tetrahydrodipicolinate + L-glutamate + H2O + H(+). It functions in the pathway amino-acid biosynthesis; L-lysine biosynthesis via DAP pathway; LL-2,6-diaminopimelate from (S)-tetrahydrodipicolinate (aminotransferase route): step 1/1. Its function is as follows. Involved in the synthesis of meso-diaminopimelate (m-DAP or DL-DAP), required for both lysine and peptidoglycan biosynthesis. Catalyzes the direct conversion of tetrahydrodipicolinate to LL-diaminopimelate. This is LL-diaminopimelate aminotransferase from Synechococcus sp. (strain RCC307).